The following is a 494-amino-acid chain: UDP-N-acetylmuramoyl-L-alanyl-D-glutamate--L-lysine ligase (494 aa).

A UDP-N-acetyl-alpha-D-muramoyl-L-alanyl-D-glutamate-binding site is contributed by S30. Position 110 to 116 (110 to 116) interacts with ATP; the sequence is GTNGKTS. UDP-N-acetyl-alpha-D-muramoyl-L-alanyl-D-glutamate contacts are provided by residues 152-153, S179, and R187; that span reads TT. K219 carries the N6-carboxylysine modification. The short motif at 406-409 is the L-lysine recognition motif element; it reads DNPA.

The protein belongs to the MurCDEF family. MurE subfamily. In terms of processing, carboxylation is probably crucial for Mg(2+) binding and, consequently, for the gamma-phosphate positioning of ATP.

It is found in the cytoplasm. It catalyses the reaction UDP-N-acetyl-alpha-D-muramoyl-L-alanyl-D-glutamate + L-lysine + ATP = UDP-N-acetyl-alpha-D-muramoyl-L-alanyl-gamma-D-glutamyl-L-lysine + ADP + phosphate + H(+). The protein operates within cell wall biogenesis; peptidoglycan biosynthesis. Catalyzes the addition of L-lysine to the nucleotide precursor UDP-N-acetylmuramoyl-L-alanyl-D-glutamate (UMAG) in the biosynthesis of bacterial cell-wall peptidoglycan. This is UDP-N-acetylmuramoyl-L-alanyl-D-glutamate--L-lysine ligase from Staphylococcus aureus (strain MW2).